Reading from the N-terminus, the 647-residue chain is Chaperone protein DnaK (647 aa).

Position 198 is a phosphothreonine; by autocatalysis (Thr198). Residues 603–647 form a disordered region; that stretch reads EQAQGAGGAQGFDPNAFQGGDAGQQQKADDGVVDAEFTEVKDDKK. Low complexity predominate over residues 618-628; the sequence is AFQGGDAGQQQ.

This sequence belongs to the heat shock protein 70 family.

Its function is as follows. Acts as a chaperone. The polypeptide is Chaperone protein DnaK (Acinetobacter baylyi (strain ATCC 33305 / BD413 / ADP1)).